A 215-amino-acid chain; its full sequence is Ribosomal RNA small subunit methyltransferase G (215 aa).

S-adenosyl-L-methionine contacts are provided by residues G82, M87, 133–134, and R148; that span reads VE.

Belongs to the methyltransferase superfamily. RNA methyltransferase RsmG family.

The protein localises to the cytoplasm. It carries out the reaction guanosine(527) in 16S rRNA + S-adenosyl-L-methionine = N(7)-methylguanosine(527) in 16S rRNA + S-adenosyl-L-homocysteine. Functionally, specifically methylates the N7 position of guanine in position 527 of 16S rRNA. This Stutzerimonas stutzeri (strain A1501) (Pseudomonas stutzeri) protein is Ribosomal RNA small subunit methyltransferase G.